We begin with the raw amino-acid sequence, 255 residues long: Coenzyme F420:L-glutamate ligase (255 aa).

GTP is bound by residues 11–14 (IPLI), 40–41 (ST), and Lys45. An a divalent metal cation-binding site is contributed by Asp109. Residue Asn112 coordinates GTP. A divalent metal cation-binding residues include Asp150, Thr151, and Glu208. Position 206–213 (206–213 (MGEGAGGT)) interacts with GTP.

The protein belongs to the CofE family. In terms of assembly, homodimer. The cofactor is Mg(2+). Mn(2+) serves as cofactor. Requires K(+) as cofactor.

It catalyses the reaction oxidized coenzyme F420-0 + GTP + L-glutamate = oxidized coenzyme F420-1 + GDP + phosphate + H(+). The catalysed reaction is oxidized coenzyme F420-1 + GTP + L-glutamate = oxidized coenzyme F420-2 + GDP + phosphate + H(+). It functions in the pathway cofactor biosynthesis; coenzyme F420 biosynthesis. Catalyzes the GTP-dependent successive addition of two or more gamma-linked L-glutamates to the L-lactyl phosphodiester of 7,8-didemethyl-8-hydroxy-5-deazariboflavin (F420-0) to form coenzyme F420-0-glutamyl-glutamate (F420-2) or polyglutamated F420 derivatives. This Methanosarcina barkeri (strain Fusaro / DSM 804) protein is Coenzyme F420:L-glutamate ligase.